The chain runs to 63 residues: uncharacterized protein (63 aa).

The signal sequence occupies residues 1–15; that stretch reads MRNPVVWGMIYFAVG. C16 is lipidated: N-palmitoyl cysteine. C16 carries S-diacylglycerol cysteine lipidation. The helical transmembrane segment at 34 to 56 threads the bilayer; sequence SILLMVFAAYNISISFKMFAFSF.

It is found in the cell membrane. This is an uncharacterized protein from Bacillus subtilis (strain 168).